The sequence spans 580 residues: Multidrug resistance-like ATP-binding protein MdlB (580 aa).

The ABC transmembrane type-1 domain occupies Ile-25–Gln-310. The next 5 helical transmembrane spans lie at Ile-26–Ile-46, Phe-61–Phe-81, Val-142–Thr-162, Trp-165–Tyr-185, and Leu-258–Val-278. Residues Ile-341 to Phe-575 enclose the ABC transporter domain. Gly-375–Ser-382 contacts ATP.

It belongs to the ABC transporter superfamily. Drug exporter-2 (TC 3.A.1.117) family.

The protein localises to the cell membrane. The enzyme catalyses ATP + H2O + xenobioticSide 1 = ADP + phosphate + xenobioticSide 2.. This chain is Multidrug resistance-like ATP-binding protein MdlB (mdlB), found in Buchnera aphidicola subsp. Schizaphis graminum (strain Sg).